Reading from the N-terminus, the 243-residue chain is Type III pantothenate kinase (243 aa).

7 to 14 is a binding site for ATP; the sequence is DLGNSRFK. Residues Tyr-91 and 98–101 contribute to the substrate site; that span reads GVDR. Asp-100 serves as the catalytic Proton acceptor. Thr-122 is a binding site for ATP. Thr-172 contacts substrate.

The protein belongs to the type III pantothenate kinase family. Homodimer. NH4(+) serves as cofactor. K(+) is required as a cofactor.

The protein resides in the cytoplasm. The catalysed reaction is (R)-pantothenate + ATP = (R)-4'-phosphopantothenate + ADP + H(+). The protein operates within cofactor biosynthesis; coenzyme A biosynthesis; CoA from (R)-pantothenate: step 1/5. Functionally, catalyzes the phosphorylation of pantothenate (Pan), the first step in CoA biosynthesis. The polypeptide is Type III pantothenate kinase (Stenotrophomonas maltophilia (strain R551-3)).